The primary structure comprises 761 residues: Cyclin-F (761 aa).

Positions arginine 19–arginine 27 match the Nuclear localization signal 1 motif. In terms of domain architecture, F-box spans valine 28–alanine 75. Residues asparagine 300–isoleucine 411 form the Cyclin N-terminal domain. 2 consecutive short sequence motifs (d box) follow at residues arginine 316–leucine 319 and arginine 355–leucine 358. 2 disordered regions span residues asparagine 575–threonine 594 and alanine 677–leucine 761. Residues arginine 580–glycine 590 are compositionally biased toward basic and acidic residues. Residues arginine 589–lysine 745 form a PEST region. A compositionally biased stretch (low complexity) spans serine 691–glycine 718. A compositionally biased stretch (basic residues) spans alanine 739–glutamine 749.

It belongs to the cyclin family. Cyclin AB subfamily. In terms of assembly, component of the SCF(CCNF) complex.

The protein localises to the nucleus. The protein resides in the cytoplasm. It localises to the perinuclear region. Its subcellular location is the cytoskeleton. It is found in the microtubule organizing center. The protein localises to the centrosome. The protein resides in the centriole. Substrate recognition component of the SCF(CCNF) E3 ubiquitin-protein ligase complex which mediates the ubiquitination and subsequent proteasomal degradation of target proteins. The SCF(CCNF) E3 ubiquitin-protein ligase complex is an integral component of the ubiquitin proteasome system (UPS) and links proteasome degradation to the cell cycle. Mediates the substrate recognition and the proteasomal degradation of various target proteins during G2 phase involved in the regulation of cell cycle progression and in the maintenance of genome stability. This is Cyclin-F (ccnf) from Xenopus laevis (African clawed frog).